The primary structure comprises 430 residues: Tol-Pal system protein TolB (430 aa).

Positions 1–21 (MKQALRVAFGFLILWASVLHA) are cleaved as a signal peptide.

It belongs to the TolB family. The Tol-Pal system is composed of five core proteins: the inner membrane proteins TolA, TolQ and TolR, the periplasmic protein TolB and the outer membrane protein Pal. They form a network linking the inner and outer membranes and the peptidoglycan layer.

It is found in the periplasm. Functionally, part of the Tol-Pal system, which plays a role in outer membrane invagination during cell division and is important for maintaining outer membrane integrity. TolB occupies a key intermediary position in the Tol-Pal system because it communicates directly with both membrane-embedded components, Pal in the outer membrane and TolA in the inner membrane. This chain is Tol-Pal system protein TolB, found in Shigella boydii serotype 18 (strain CDC 3083-94 / BS512).